We begin with the raw amino-acid sequence, 103 residues long: MRRELMKMKINVDKSLIKAVKTGKVIIGANRTVDAAENGSAKMVVLASNCPADIKKKVQETNVPVLEYEGTSVELGPVCGKPFTIAAMAILDAGESDILAATA.

It belongs to the eukaryotic ribosomal protein eL30 family.

The polypeptide is Large ribosomal subunit protein eL30 (Methanosarcina mazei (strain ATCC BAA-159 / DSM 3647 / Goe1 / Go1 / JCM 11833 / OCM 88) (Methanosarcina frisia)).